The chain runs to 252 residues: Acetoacetate decarboxylase (252 aa).

Catalysis depends on Lys116, which acts as the Schiff-base intermediate with acetoacetate.

This sequence belongs to the ADC family.

The enzyme catalyses acetoacetate + H(+) = acetone + CO2. Functionally, catalyzes the conversion of acetoacetate to acetone and carbon dioxide. The protein is Acetoacetate decarboxylase of Paraburkholderia phytofirmans (strain DSM 17436 / LMG 22146 / PsJN) (Burkholderia phytofirmans).